Here is a 392-residue protein sequence, read N- to C-terminus: Formate-dependent phosphoribosylglycinamide formyltransferase (392 aa).

N(1)-(5-phospho-beta-D-ribosyl)glycinamide-binding positions include 15–16 (EL) and Glu75. Residues Arg107, Lys148, 153–158 (SSGKGQ), 188–191 (EEFL), and Glu196 each bind ATP. In terms of domain architecture, ATP-grasp spans 112–302 (DLAAGELNLR…EFELHLRAVL (191 aa)). Mg(2+) is bound by residues Glu261 and Glu273. N(1)-(5-phospho-beta-D-ribosyl)glycinamide is bound by residues Asp280, Lys350, and 357-358 (RR).

This sequence belongs to the PurK/PurT family. As to quaternary structure, homodimer.

The catalysed reaction is N(1)-(5-phospho-beta-D-ribosyl)glycinamide + formate + ATP = N(2)-formyl-N(1)-(5-phospho-beta-D-ribosyl)glycinamide + ADP + phosphate + H(+). It functions in the pathway purine metabolism; IMP biosynthesis via de novo pathway; N(2)-formyl-N(1)-(5-phospho-D-ribosyl)glycinamide from N(1)-(5-phospho-D-ribosyl)glycinamide (formate route): step 1/1. Its function is as follows. Involved in the de novo purine biosynthesis. Catalyzes the transfer of formate to 5-phospho-ribosyl-glycinamide (GAR), producing 5-phospho-ribosyl-N-formylglycinamide (FGAR). Formate is provided by PurU via hydrolysis of 10-formyl-tetrahydrofolate. This Synechococcus sp. (strain CC9605) protein is Formate-dependent phosphoribosylglycinamide formyltransferase.